A 187-amino-acid chain; its full sequence is Threonylcarbamoyl-AMP synthase (187 aa).

The YrdC-like domain occupies 3–187 (QVTPSQISGI…IQTGHIFRQG (185 aa)).

This sequence belongs to the SUA5 family. TsaC subfamily.

It is found in the cytoplasm. It catalyses the reaction L-threonine + hydrogencarbonate + ATP = L-threonylcarbamoyladenylate + diphosphate + H2O. Functionally, required for the formation of a threonylcarbamoyl group on adenosine at position 37 (t(6)A37) in tRNAs that read codons beginning with adenine. Catalyzes the conversion of L-threonine, HCO(3)(-)/CO(2) and ATP to give threonylcarbamoyl-AMP (TC-AMP) as the acyladenylate intermediate, with the release of diphosphate. The protein is Threonylcarbamoyl-AMP synthase of Shewanella amazonensis (strain ATCC BAA-1098 / SB2B).